The chain runs to 371 residues: Glutamate 5-kinase (371 aa).

Position 14 (lysine 14) interacts with ATP. Substrate contacts are provided by serine 54, aspartate 141, and asparagine 153. 173-174 provides a ligand contact to ATP; it reads TD. The PUA domain occupies 280-357; the sequence is AGSLIVDAGA…SDIEQLLGYI (78 aa).

This sequence belongs to the glutamate 5-kinase family.

The protein resides in the cytoplasm. It carries out the reaction L-glutamate + ATP = L-glutamyl 5-phosphate + ADP. It participates in amino-acid biosynthesis; L-proline biosynthesis; L-glutamate 5-semialdehyde from L-glutamate: step 1/2. Its function is as follows. Catalyzes the transfer of a phosphate group to glutamate to form L-glutamate 5-phosphate. This chain is Glutamate 5-kinase, found in Azoarcus sp. (strain BH72).